A 442-amino-acid chain; its full sequence is GTPase Der (442 aa).

EngA-type G domains follow at residues Ala-2–Gly-168 and Leu-182–Asp-356. Residues Gly-8 to Ser-15, Asp-55 to Leu-59, Asn-118 to Glu-121, Gly-188 to Ser-195, Asp-235 to Met-239, and Asn-301 to Asp-304 contribute to the GTP site. The 86-residue stretch at Leu-357–Lys-442 folds into the KH-like domain.

It belongs to the TRAFAC class TrmE-Era-EngA-EngB-Septin-like GTPase superfamily. EngA (Der) GTPase family. Associates with the 50S ribosomal subunit.

Functionally, GTPase that plays an essential role in the late steps of ribosome biogenesis. The polypeptide is GTPase Der (Kosmotoga olearia (strain ATCC BAA-1733 / DSM 21960 / TBF 19.5.1)).